A 215-amino-acid polypeptide reads, in one-letter code: MSLFGLGSRNQKTFRPKKSAPTGSKGAQLQKHIDATLGSGNLREAVKLPPGEDINEWLAVNTVDFFNQVNTMFGTLTEFCTPSNCPTMTAGPKYEYRWADGVTIKKPIEVSAPKYVEYLMDWMESQLDDETIFPQRLGAPFPPNFRDVVKTIFKRLFRVYAHIYHSHFQKIVSLKEEAHLNTCFKHFVLFTWEFRLIEKAELAPLEDLVDSIIQL.

The disordered stretch occupies residues 1 to 29; that stretch reads MSLFGLGSRNQKTFRPKKSAPTGSKGAQL. Zn(2+) is bound by residues C80, C85, H162, and H167.

It belongs to the MOB1/phocein family. Constitutively expressed with higher expression in roots, flowers and pods than in leaves and stems.

The protein resides in the cytoplasm. The protein localises to the cytoskeleton. It is found in the phragmoplast. This is MOB kinase activator-like 1B from Medicago sativa subsp. falcata (Sickle medic).